A 618-amino-acid polypeptide reads, in one-letter code: Protease 4 (618 aa).

Residues 1–24 (MRTLWRFIAGFFKWTWRVLNFVRE) are Cytoplasmic-facing. Residues 25-45 (MVLNLFFIFLVLVGVGIWMQI) traverse the membrane as a helical segment. Residues 46–618 (GNGSNSEQTA…AFCLTCANVR (573 aa)) lie on the Periplasmic side of the membrane. Lys209 functions as the Proton donor/acceptor in the catalytic mechanism. The active-site Nucleophile is the Ser409.

Belongs to the peptidase S49 family. In terms of assembly, homotetramer.

It is found in the cell inner membrane. Functionally, digests cleaved signal peptides in vitro, its in vivo function is unknown. This activity is necessary to maintain proper secretion of mature proteins across the membrane. This is Protease 4 (sppA) from Salmonella typhi.